Consider the following 346-residue polypeptide: Cytidine deaminase 5 (346 aa).

CMP/dCMP-type deaminase domains lie at threonine 20–glutamate 148 and aspartate 183–alanine 304. Substrate is bound at residue asparagine 58 to glutamate 60. Histidine 71 provides a ligand contact to Zn(2+). Glutamate 73 (proton donor) is an active-site residue. Zn(2+) contacts are provided by cysteine 104 and cysteine 107.

This sequence belongs to the cytidine and deoxycytidylate deaminase family. Homodimer. Zn(2+) is required as a cofactor.

The catalysed reaction is cytidine + H2O + H(+) = uridine + NH4(+). It carries out the reaction 2'-deoxycytidine + H2O + H(+) = 2'-deoxyuridine + NH4(+). This enzyme scavenges exogenous and endogenous cytidine and 2'-deoxycytidine for UMP synthesis. The chain is Cytidine deaminase 5 (CDA5) from Arabidopsis thaliana (Mouse-ear cress).